The chain runs to 184 residues: Elongation factor P (184 aa).

This sequence belongs to the elongation factor P family.

The protein resides in the cytoplasm. It functions in the pathway protein biosynthesis; polypeptide chain elongation. In terms of biological role, involved in peptide bond synthesis. Stimulates efficient translation and peptide-bond synthesis on native or reconstituted 70S ribosomes in vitro. Probably functions indirectly by altering the affinity of the ribosome for aminoacyl-tRNA, thus increasing their reactivity as acceptors for peptidyl transferase. The polypeptide is Elongation factor P (Polaromonas sp. (strain JS666 / ATCC BAA-500)).